Reading from the N-terminus, the 1091-residue chain is Ubiquitin carboxyl-terminal hydrolase 36 (1091 aa).

The segment at alanine 115–lysine 152 is disordered. Over residues histidine 128–asparagine 146 the composition is skewed to low complexity. One can recognise a USP domain in the interval serine 176 to aspartate 484. Residue cysteine 185 is the Nucleophile of the active site. The active-site Proton acceptor is histidine 443. 2 positions are modified to phosphoserine: serine 518 and serine 522. Disordered regions lie at residues proline 523–leucine 572, proline 594–lysine 892, glutamine 972–proline 1007, and leucine 1068–serine 1091. The segment covering threonine 547–leucine 572 has biased composition (polar residues). Residues proline 594–asparagine 612 show a composition bias toward low complexity. Positions lysine 643–lysine 652 are enriched in basic and acidic residues. The segment covering proline 653–serine 667 has biased composition (low complexity). Threonine 659 and threonine 663 each carry phosphothreonine. Phosphoserine occurs at positions 673 and 675. Positions arginine 691–proline 702 are enriched in basic and acidic residues. Over residues threonine 703–threonine 727 the composition is skewed to polar residues. A Phosphoserine modification is found at serine 749. Over residues serine 749 to proline 759 the composition is skewed to acidic residues. The span at proline 769–glycine 780 shows a compositional bias: low complexity. The span at proline 781–proline 790 shows a compositional bias: pro residues. At serine 783 the chain carries Phosphoserine. Threonine 786 is subject to Phosphothreonine. Position 789 is a phosphoserine (serine 789). Positions aspartate 806 to valine 821 are enriched in acidic residues. Phosphothreonine is present on threonine 829. Polar residues-rich tracts occupy residues phenylalanine 838–threonine 850 and alanine 863–threonine 886. Serine 847 carries the post-translational modification Phosphoserine. At threonine 850 the chain carries Phosphothreonine.

It belongs to the peptidase C19 family. As to quaternary structure, interacts with atms/PAF1, but not with CycT.

The protein localises to the nucleus. The protein resides in the nucleolus. The catalysed reaction is Thiol-dependent hydrolysis of ester, thioester, amide, peptide and isopeptide bonds formed by the C-terminal Gly of ubiquitin (a 76-residue protein attached to proteins as an intracellular targeting signal).. In terms of biological role, required for maintaining multiple types of adult stem cells, including male and female germline, epithelial follicle cell and intestinal stem cells. May function as a transcriptional repressor by continually deubiquiting histone H2B at the promoters of genes critical for cellular differentiation, thereby preventing histone H3 'Lys-4' trimethylation (H3K4). Controls selective autophagy activation by ubiquitinated proteins. The sequence is that of Ubiquitin carboxyl-terminal hydrolase 36 (Usp36) from Drosophila ananassae (Fruit fly).